A 251-amino-acid chain; its full sequence is Cobalt transport protein CbiM (251 aa).

The first 27 residues, 1–27 (MNKKKNTILIGLYFLVGIMLFPDRIYA), serve as a signal peptide directing secretion. The next 6 membrane-spanning stretches (helical) occupy residues 35–55 (LPVK…ALGI), 66–86 (GPGI…LSSL), 103–123 (LGAI…VLIF), 131–151 (GGLT…PFVA), 166–186 (WLSV…TTAT), and 208–228 (VFAT…VLIF).

Belongs to the CbiM family. In terms of assembly, forms an energy-coupling factor (ECF) transporter complex composed of an ATP-binding protein (A component, CbiO), a transmembrane protein (T component, CbiQ) and 2 possible substrate-capture proteins (S components, CbiM and CbiN) of unknown stoichimetry.

It is found in the cell membrane. It functions in the pathway cofactor biosynthesis; adenosylcobalamin biosynthesis. Functionally, part of the energy-coupling factor (ECF) transporter complex CbiMNOQ involved in cobalt import. The protein is Cobalt transport protein CbiM of Acetohalobium arabaticum (strain ATCC 49924 / DSM 5501 / Z-7288).